The following is a 159-amino-acid chain: uncharacterized protein (159 aa).

Residues 9–36 (VTSGNKEKKKKRSSAGLTGHAPPAADSS) are disordered.

This is an uncharacterized protein from Caenorhabditis elegans.